The following is a 118-amino-acid chain: UPF0145 protein PTO0347 (118 aa).

The protein belongs to the UPF0145 family.

The protein is UPF0145 protein PTO0347 of Picrophilus torridus (strain ATCC 700027 / DSM 9790 / JCM 10055 / NBRC 100828 / KAW 2/3).